The following is a 310-amino-acid chain: O-acetylserine sulfhydrylase (310 aa).

Lys44 is subject to N6-(pyridoxal phosphate)lysine. Pyridoxal 5'-phosphate contacts are provided by residues Asn74, 178 to 182, and Ser266; that span reads GTGGT.

The protein belongs to the cysteine synthase/cystathionine beta-synthase family. As to quaternary structure, homodimer. Requires pyridoxal 5'-phosphate as cofactor.

It carries out the reaction O-acetyl-L-serine + hydrogen sulfide = L-cysteine + acetate. It participates in amino-acid biosynthesis; L-cysteine biosynthesis; L-cysteine from L-serine: step 2/2. Functionally, catalyzes the conversion of O-acetylserine (OAS) to cysteine through the elimination of acetate and addition of hydrogen sulfide. This Mycobacterium bovis (strain ATCC BAA-935 / AF2122/97) protein is O-acetylserine sulfhydrylase (cysK).